The primary structure comprises 390 residues: Flap endonuclease 1-2 (390 aa).

An N-domain region spans residues 1-108; that stretch reads MGIHQLMQFL…GELARRKKLK (108 aa). Asp34 serves as a coordination point for Mg(2+). Arg74 provides a ligand contact to DNA. Asp90, Glu162, Glu164, Asp183, and Asp185 together coordinate Mg(2+). Residues 126-254 form an I-domain region; the sequence is QALLQNQRTT…GTAYKLIKEY (129 aa). Glu162 serves as a coordination point for DNA. DNA-binding residues include Gly232 and Asp234. Residue Asp234 coordinates Mg(2+). The segment at 348-356 is interaction with PCNA; sequence FQSRLENFF. Positions 359–390 are disordered; sequence TTKIIHPNNSKAKAKSNKKTEQPQKSGGKKKI.

The protein belongs to the XPG/RAD2 endonuclease family. FEN1 subfamily. Interacts with PCNA. Three molecules of FEN1 bind to one PCNA trimer with each molecule binding to one PCNA monomer. PCNA stimulates the nuclease activity without altering cleavage specificity. It depends on Mg(2+) as a cofactor. In terms of processing, phosphorylated. Phosphorylation upon DNA damage induces relocalization to the nuclear plasma.

It is found in the nucleus. Its subcellular location is the nucleolus. The protein localises to the nucleoplasm. The protein resides in the mitochondrion. Structure-specific nuclease with 5'-flap endonuclease and 5'-3' exonuclease activities involved in DNA replication and repair. During DNA replication, cleaves the 5'-overhanging flap structure that is generated by displacement synthesis when DNA polymerase encounters the 5'-end of a downstream Okazaki fragment. It enters the flap from the 5'-end and then tracks to cleave the flap base, leaving a nick for ligation. Also involved in the long patch base excision repair (LP-BER) pathway, by cleaving within the apurinic/apyrimidinic (AP) site-terminated flap. Acts as a genome stabilization factor that prevents flaps from equilibrating into structures that lead to duplications and deletions. Also possesses 5'-3' exonuclease activity on nicked or gapped double-stranded DNA, and exhibits RNase H activity. Also involved in replication and repair of rDNA and in repairing mitochondrial DNA. The protein is Flap endonuclease 1-2 of Paramecium tetraurelia.